The chain runs to 373 residues: Spermidine/putrescine import ATP-binding protein PotA (373 aa).

Positions 8–238 (FELRGVSKYF…PANLYVARFV (231 aa)) constitute an ABC transporter domain. 40 to 47 (GPSGCGKT) serves as a coordination point for ATP.

It belongs to the ABC transporter superfamily. Spermidine/putrescine importer (TC 3.A.1.11.1) family. The complex is composed of two ATP-binding proteins (PotA), two transmembrane proteins (PotB and PotC) and a solute-binding protein (PotD).

It localises to the cell inner membrane. It carries out the reaction ATP + H2O + polyamine-[polyamine-binding protein]Side 1 = ADP + phosphate + polyamineSide 2 + [polyamine-binding protein]Side 1.. Part of the ABC transporter complex PotABCD involved in spermidine/putrescine import. Responsible for energy coupling to the transport system. This is Spermidine/putrescine import ATP-binding protein PotA from Oleidesulfovibrio alaskensis (strain ATCC BAA-1058 / DSM 17464 / G20) (Desulfovibrio alaskensis).